We begin with the raw amino-acid sequence, 394 residues long: Na(+)/H(+) antiporter NhaA (394 aa).

Transmembrane regions (helical) follow at residues 14 to 34 (AGGL…NSAL), 59 to 79 (LLLW…GLEV), 95 to 115 (VFPA…YLLF), 125 to 145 (GWAI…ALLG), 154 to 174 (VFLL…IALF), 179 to 199 (VSLQ…YMNW), 213 to 233 (LVLW…GVIV), 254 to 274 (GLHP…NAGV), 292 to 312 (IATG…WLAV), 328 to 348 (IFAV…IASL), and 363 to 383 (LGIL…LRLV).

Belongs to the NhaA Na(+)/H(+) (TC 2.A.33) antiporter family.

It is found in the cell inner membrane. The catalysed reaction is Na(+)(in) + 2 H(+)(out) = Na(+)(out) + 2 H(+)(in). Its function is as follows. Na(+)/H(+) antiporter that extrudes sodium in exchange for external protons. This is Na(+)/H(+) antiporter NhaA from Yersinia pseudotuberculosis serotype IB (strain PB1/+).